The following is a 271-amino-acid chain: Thiazole synthase (271 aa).

Lys-104 (schiff-base intermediate with DXP) is an active-site residue. 1-deoxy-D-xylulose 5-phosphate contacts are provided by residues Gly-165, 192-193, and 214-215; these read AG and NT.

It belongs to the ThiG family. In terms of assembly, homotetramer. Forms heterodimers with either ThiH or ThiS.

Its subcellular location is the cytoplasm. It catalyses the reaction [ThiS sulfur-carrier protein]-C-terminal-Gly-aminoethanethioate + 2-iminoacetate + 1-deoxy-D-xylulose 5-phosphate = [ThiS sulfur-carrier protein]-C-terminal Gly-Gly + 2-[(2R,5Z)-2-carboxy-4-methylthiazol-5(2H)-ylidene]ethyl phosphate + 2 H2O + H(+). Its pathway is cofactor biosynthesis; thiamine diphosphate biosynthesis. In terms of biological role, catalyzes the rearrangement of 1-deoxy-D-xylulose 5-phosphate (DXP) to produce the thiazole phosphate moiety of thiamine. Sulfur is provided by the thiocarboxylate moiety of the carrier protein ThiS. In vitro, sulfur can be provided by H(2)S. The chain is Thiazole synthase from Burkholderia mallei (strain ATCC 23344).